The sequence spans 275 residues: 3-deoxy-manno-octulosonate cytidylyltransferase (275 aa).

It belongs to the KdsB family.

The protein resides in the cytoplasm. The catalysed reaction is 3-deoxy-alpha-D-manno-oct-2-ulosonate + CTP = CMP-3-deoxy-beta-D-manno-octulosonate + diphosphate. Its pathway is nucleotide-sugar biosynthesis; CMP-3-deoxy-D-manno-octulosonate biosynthesis; CMP-3-deoxy-D-manno-octulosonate from 3-deoxy-D-manno-octulosonate and CTP: step 1/1. It participates in bacterial outer membrane biogenesis; lipopolysaccharide biosynthesis. Functionally, activates KDO (a required 8-carbon sugar) for incorporation into bacterial lipopolysaccharide in Gram-negative bacteria. This Psychrobacter sp. (strain PRwf-1) protein is 3-deoxy-manno-octulosonate cytidylyltransferase.